The chain runs to 211 residues: MDLTDTQQAILQLIAERIESEGAPPSQTEIARAFGFKGVRAAQYHLEALEQAGAIRRIPGQARGIRLVQAPPLEKLAEPGLPDNVLRLPVLGRVAAGLPIGADIGSDDFVVLDRVFFSPAPDYLLKVQGDSMIDEGIFDGDLIGVHRTRDAHSGQIVVARIDDEITVKLLKIAKDRIRLLPRNPDYKPIEVLPDQDFSIEGLYCGLLRPNR.

The segment at residues 27-47 (QTEIARAFGFKGVRAAQYHLE) is a DNA-binding region (H-T-H motif). Catalysis depends on for autocatalytic cleavage activity residues Ser131 and Lys168.

The protein belongs to the peptidase S24 family. In terms of assembly, homodimer.

It catalyses the reaction Hydrolysis of Ala-|-Gly bond in repressor LexA.. Its function is as follows. Represses a number of genes involved in the response to DNA damage (SOS response), including recA and lexA. In the presence of single-stranded DNA, RecA interacts with LexA causing an autocatalytic cleavage which disrupts the DNA-binding part of LexA, leading to derepression of the SOS regulon and eventually DNA repair. The polypeptide is LexA repressor (Stenotrophomonas maltophilia (strain R551-3)).